The chain runs to 83 residues: Putative defensin-like protein 67 (83 aa).

The signal sequence occupies residues 1–24 (MGSSKLMVTCIVVAMLTISCDILS). 4 cysteine pairs are disulfide-bonded: Cys-38–Cys-82, Cys-42–Cys-65, Cys-51–Cys-80, and Cys-55–Cys-81.

Belongs to the DEFL family.

Its subcellular location is the secreted. In Arabidopsis thaliana (Mouse-ear cress), this protein is Putative defensin-like protein 67.